Reading from the N-terminus, the 462-residue chain is Argininosuccinate lyase (462 aa).

Belongs to the lyase 1 family. Argininosuccinate lyase subfamily.

It localises to the cytoplasm. It catalyses the reaction 2-(N(omega)-L-arginino)succinate = fumarate + L-arginine. It functions in the pathway amino-acid biosynthesis; L-arginine biosynthesis; L-arginine from L-ornithine and carbamoyl phosphate: step 3/3. In Leuconostoc citreum (strain KM20), this protein is Argininosuccinate lyase.